The sequence spans 98 residues: ATP synthase subunit c (98 aa).

A run of 2 helical transmembrane segments spans residues 27–47 (ALALSAPFAVGLAALGSGLGL) and 73–93 (IIGAALIEALTIYALIVFFVV).

This sequence belongs to the ATPase C chain family. F-type ATPases have 2 components, F(1) - the catalytic core - and F(0) - the membrane proton channel. F(1) has five subunits: alpha(3), beta(3), gamma(1), delta(1), epsilon(1). F(0) has three main subunits: a(1), b(2) and c(10-14). The alpha and beta chains form an alternating ring which encloses part of the gamma chain. F(1) is attached to F(0) by a central stalk formed by the gamma and epsilon chains, while a peripheral stalk is formed by the delta and b chains.

Its subcellular location is the cell inner membrane. F(1)F(0) ATP synthase produces ATP from ADP in the presence of a proton or sodium gradient. F-type ATPases consist of two structural domains, F(1) containing the extramembraneous catalytic core and F(0) containing the membrane proton channel, linked together by a central stalk and a peripheral stalk. During catalysis, ATP synthesis in the catalytic domain of F(1) is coupled via a rotary mechanism of the central stalk subunits to proton translocation. Its function is as follows. Key component of the F(0) channel; it plays a direct role in translocation across the membrane. A homomeric c-ring of between 10-14 subunits forms the central stalk rotor element with the F(1) delta and epsilon subunits. This is ATP synthase subunit c from Protochlamydia amoebophila (strain UWE25).